Reading from the N-terminus, the 81-residue chain is Defensin-like protein 153 (81 aa).

Residues 1–26 (MKNVSQVSVAVLLIFSILVLGIGVQG) form the signal peptide. Disulfide bonds link Cys-30–Cys-81, Cys-41–Cys-60, Cys-46–Cys-75, and Cys-50–Cys-77.

This sequence belongs to the DEFL family.

The protein resides in the secreted. The protein is Defensin-like protein 153 (LCR31) of Arabidopsis thaliana (Mouse-ear cress).